An 85-amino-acid chain; its full sequence is Putative membrane protein insertion efficiency factor (85 aa).

Belongs to the UPF0161 family.

The protein localises to the cell membrane. Functionally, could be involved in insertion of integral membrane proteins into the membrane. The protein is Putative membrane protein insertion efficiency factor of Buchnera aphidicola subsp. Baizongia pistaciae (strain Bp).